The primary structure comprises 277 residues: Large ribosomal subunit protein uL2 (277 aa).

Disordered regions lie at residues 24–55 (ITTS…RHHG) and 221–277 (RGSV…RKKK).

This sequence belongs to the universal ribosomal protein uL2 family. As to quaternary structure, part of the 50S ribosomal subunit. Forms a bridge to the 30S subunit in the 70S ribosome.

One of the primary rRNA binding proteins. Required for association of the 30S and 50S subunits to form the 70S ribosome, for tRNA binding and peptide bond formation. It has been suggested to have peptidyltransferase activity; this is somewhat controversial. Makes several contacts with the 16S rRNA in the 70S ribosome. The polypeptide is Large ribosomal subunit protein uL2 (Listeria welshimeri serovar 6b (strain ATCC 35897 / DSM 20650 / CCUG 15529 / CIP 8149 / NCTC 11857 / SLCC 5334 / V8)).